The primary structure comprises 609 residues: 2',5'-phosphodiesterase 12 (609 aa).

The N-terminal 16 residues, 1–16 (MWRLPGVRAALRGVRT), are a transit peptide targeting the mitochondrion. Positions 203 to 231 (PRAAEPEGGGPSSSSPSSPSPGWTETGVD) are disordered. Over residues 214–224 (SSSSPSSPSPG) the composition is skewed to low complexity. Ser217 is modified (phosphoserine). 3 residues coordinate Mg(2+): Glu351, Asp496, and Asn498. The Proton donor/acceptor role is filled by Asp496.

The protein belongs to the CCR4/nocturin family. Requires Mg(2+) as cofactor. In terms of tissue distribution, liver.

The protein localises to the mitochondrion matrix. The catalysed reaction is Exonucleolytic cleavage of poly(A) to 5'-AMP.. In terms of biological role, enzyme that cleaves 2',5'-phosphodiester bond linking adenosines of the 5'-triphosphorylated oligoadenylates, triphosphorylated oligoadenylates referred as 2-5A modulates the 2-5A system. Degrades triphosphorylated 2-5A to produce AMP and ATP. Also cleaves 3',5'-phosphodiester bond of oligoadenylates. Plays a role as a negative regulator of the 2-5A system that is one of the major pathways for antiviral and antitumor functions induced by interferons (IFNs). Suppression of this enzyme increases cellular 2-5A levels and decreases viral replication in cultured small-airway epithelial cells. In Bos taurus (Bovine), this protein is 2',5'-phosphodiesterase 12 (PDE12).